The primary structure comprises 1597 residues: Pentafunctional AROM polypeptide (1597 aa).

The tract at residues Met1–Asn384 is 3-dehydroquinate synthase. Residues Asp44–Asn46, Glu81–Lys84, Gly114–Val116, and Asp119 each bind NAD(+). Arg130 contributes to the 7-phospho-2-dehydro-3-deoxy-D-arabino-heptonate binding site. Residue Thr139 to Thr140 coordinates NAD(+). 2 residues coordinate 7-phospho-2-dehydro-3-deoxy-D-arabino-heptonate: Asp146 and Lys152. Lys161 lines the NAD(+) pocket. Asn162 contacts 7-phospho-2-dehydro-3-deoxy-D-arabino-heptonate. Residues Phe179–Thr182 and Asn190 contribute to the NAD(+) site. Glu194 provides a ligand contact to Zn(2+). 7-phospho-2-dehydro-3-deoxy-D-arabino-heptonate is bound by residues Glu194–Lys197 and Lys250. Glu260 functions as the Proton acceptor; for 3-dehydroquinate synthase activity in the catalytic mechanism. 7-phospho-2-dehydro-3-deoxy-D-arabino-heptonate-binding positions include Arg264–Asn268 and His271. His271 is a Zn(2+) binding site. The active-site Proton acceptor; for 3-dehydroquinate synthase activity is His275. Residues His287 and Lys356 each coordinate 7-phospho-2-dehydro-3-deoxy-D-arabino-heptonate. His287 serves as a coordination point for Zn(2+). Residues Val397–Val842 form an EPSP synthase region. Residue Cys824 is the For EPSP synthase activity of the active site. The interval Ala866–Ser1057 is shikimate kinase. An ATP-binding site is contributed by Gly872–Thr879. The segment at Leu1058–Glu1278 is 3-dehydroquinase. His1181 acts as the Proton acceptor; for 3-dehydroquinate dehydratase activity in catalysis. The active-site Schiff-base intermediate with substrate; for 3-dehydroquinate dehydratase activity is Lys1209. A shikimate dehydrogenase region spans residues Ser1291–Thr1597.

This sequence in the N-terminal section; belongs to the sugar phosphate cyclases superfamily. Dehydroquinate synthase family. The protein in the 2nd section; belongs to the EPSP synthase family. It in the 3rd section; belongs to the shikimate kinase family. In the 4th section; belongs to the type-I 3-dehydroquinase family. This sequence in the C-terminal section; belongs to the shikimate dehydrogenase family. Homodimer. Zn(2+) is required as a cofactor.

Its subcellular location is the cytoplasm. The catalysed reaction is 7-phospho-2-dehydro-3-deoxy-D-arabino-heptonate = 3-dehydroquinate + phosphate. It catalyses the reaction 3-dehydroquinate = 3-dehydroshikimate + H2O. The enzyme catalyses shikimate + NADP(+) = 3-dehydroshikimate + NADPH + H(+). It carries out the reaction shikimate + ATP = 3-phosphoshikimate + ADP + H(+). The catalysed reaction is 3-phosphoshikimate + phosphoenolpyruvate = 5-O-(1-carboxyvinyl)-3-phosphoshikimate + phosphate. Its pathway is metabolic intermediate biosynthesis; chorismate biosynthesis; chorismate from D-erythrose 4-phosphate and phosphoenolpyruvate: step 2/7. The protein operates within metabolic intermediate biosynthesis; chorismate biosynthesis; chorismate from D-erythrose 4-phosphate and phosphoenolpyruvate: step 3/7. It participates in metabolic intermediate biosynthesis; chorismate biosynthesis; chorismate from D-erythrose 4-phosphate and phosphoenolpyruvate: step 4/7. It functions in the pathway metabolic intermediate biosynthesis; chorismate biosynthesis; chorismate from D-erythrose 4-phosphate and phosphoenolpyruvate: step 5/7. Its pathway is metabolic intermediate biosynthesis; chorismate biosynthesis; chorismate from D-erythrose 4-phosphate and phosphoenolpyruvate: step 6/7. In terms of biological role, the AROM polypeptide catalyzes 5 consecutive enzymatic reactions in prechorismate polyaromatic amino acid biosynthesis. The chain is Pentafunctional AROM polypeptide from Ajellomyces dermatitidis (strain ER-3 / ATCC MYA-2586) (Blastomyces dermatitidis).